The sequence spans 89 residues: Small ribosomal subunit protein bS20 (89 aa).

This sequence belongs to the bacterial ribosomal protein bS20 family.

Binds directly to 16S ribosomal RNA. The polypeptide is Small ribosomal subunit protein bS20 (Hahella chejuensis (strain KCTC 2396)).